Consider the following 313-residue polypeptide: Homoserine O-succinyltransferase (313 aa).

The active-site Acyl-thioester intermediate is the Cys142. Substrate is bound by residues Lys163 and Ser192. His235 (proton acceptor) is an active-site residue. Residue Glu237 is part of the active site. Arg249 is a substrate binding site.

It belongs to the MetA family.

The protein localises to the cytoplasm. It catalyses the reaction L-homoserine + succinyl-CoA = O-succinyl-L-homoserine + CoA. The protein operates within amino-acid biosynthesis; L-methionine biosynthesis via de novo pathway; O-succinyl-L-homoserine from L-homoserine: step 1/1. Transfers a succinyl group from succinyl-CoA to L-homoserine, forming succinyl-L-homoserine. The sequence is that of Homoserine O-succinyltransferase from Shewanella baltica (strain OS223).